The chain runs to 522 residues: 2-isopropylmalate synthase (522 aa).

One can recognise a Pyruvate carboxyltransferase domain in the interval 5–267; sequence VIIFDTTLRD…DCGINAKEIH (263 aa). Mn(2+) contacts are provided by aspartate 14, histidine 202, histidine 204, and asparagine 238. The interval 392–522 is regulatory domain; that stretch reads QLQHMMVHSD…IHKERELGGV (131 aa).

Belongs to the alpha-IPM synthase/homocitrate synthase family. LeuA type 1 subfamily. Homodimer. Mn(2+) serves as cofactor.

It is found in the cytoplasm. The catalysed reaction is 3-methyl-2-oxobutanoate + acetyl-CoA + H2O = (2S)-2-isopropylmalate + CoA + H(+). Its pathway is amino-acid biosynthesis; L-leucine biosynthesis; L-leucine from 3-methyl-2-oxobutanoate: step 1/4. Functionally, catalyzes the condensation of the acetyl group of acetyl-CoA with 3-methyl-2-oxobutanoate (2-ketoisovalerate) to form 3-carboxy-3-hydroxy-4-methylpentanoate (2-isopropylmalate). The polypeptide is 2-isopropylmalate synthase (Shewanella frigidimarina (strain NCIMB 400)).